The primary structure comprises 208 residues: Translation initiation factor 2 subunit beta (208 aa).

Positions 144-202 (GIEEGKEYTVEISEVGSSGEGRASFRGFTIFVPGTKKGETVKVKIKKIKNDVAIAEVVS) constitute a TRAM domain.

The protein belongs to the eIF-2-beta/eIF-5 family. In terms of assembly, heterotrimer composed of an alpha, a beta and a gamma chain.

In terms of biological role, eIF-2 functions in the early steps of protein synthesis by forming a ternary complex with GTP and initiator tRNA. This is Translation initiation factor 2 subunit beta (eif2b) from Thermoplasma volcanium (strain ATCC 51530 / DSM 4299 / JCM 9571 / NBRC 15438 / GSS1).